A 253-amino-acid polypeptide reads, in one-letter code: 4-hydroxy-tetrahydrodipicolinate reductase (253 aa).

Residues 8–13, aspartate 34, 76–78, and 108–111 each bind NAD(+); these read GAKGRM, GTT, and APNF. The Proton donor/acceptor role is filled by histidine 138. Position 139 (histidine 139) interacts with (S)-2,3,4,5-tetrahydrodipicolinate. Lysine 142 serves as the catalytic Proton donor. Residue 148 to 149 participates in (S)-2,3,4,5-tetrahydrodipicolinate binding; it reads GT.

Belongs to the DapB family.

It localises to the cytoplasm. It carries out the reaction (S)-2,3,4,5-tetrahydrodipicolinate + NAD(+) + H2O = (2S,4S)-4-hydroxy-2,3,4,5-tetrahydrodipicolinate + NADH + H(+). The enzyme catalyses (S)-2,3,4,5-tetrahydrodipicolinate + NADP(+) + H2O = (2S,4S)-4-hydroxy-2,3,4,5-tetrahydrodipicolinate + NADPH + H(+). It participates in amino-acid biosynthesis; L-lysine biosynthesis via DAP pathway; (S)-tetrahydrodipicolinate from L-aspartate: step 4/4. Its function is as follows. Catalyzes the conversion of 4-hydroxy-tetrahydrodipicolinate (HTPA) to tetrahydrodipicolinate. The sequence is that of 4-hydroxy-tetrahydrodipicolinate reductase from Bifidobacterium animalis subsp. lactis (strain AD011).